A 122-amino-acid polypeptide reads, in one-letter code: Small ribosomal subunit protein uS12c (122 aa).

It belongs to the universal ribosomal protein uS12 family. Part of the 30S ribosomal subunit.

The protein resides in the plastid. The protein localises to the chloroplast. In terms of biological role, with S4 and S5 plays an important role in translational accuracy. Located at the interface of the 30S and 50S subunits. In Mesostigma viride (Green alga), this protein is Small ribosomal subunit protein uS12c (rps12).